Reading from the N-terminus, the 80-residue chain is 14-3-3-like protein 1 (80 aa).

Belongs to the 14-3-3 family.

The sequence is that of 14-3-3-like protein 1 from Pseudotsuga menziesii (Douglas-fir).